We begin with the raw amino-acid sequence, 75 residues long: UPF0291 protein LMOf2365_1322 (75 aa).

Residues aspartate 56–histidine 75 are disordered. Over residues histidine 65 to histidine 75 the composition is skewed to basic residues.

It belongs to the UPF0291 family.

It localises to the cytoplasm. This Listeria monocytogenes serotype 4b (strain F2365) protein is UPF0291 protein LMOf2365_1322.